Reading from the N-terminus, the 658-residue chain is Translation factor GUF1, mitochondrial (658 aa).

One can recognise a tr-type G domain in the interval 45–231; the sequence is ENYRNFSIVA…AVIDRIPPPT (187 aa). Residues 54–61, 123–127, and 177–180 each bind GTP; these read AHIDHGKS, DTPGH, and NKID.

Belongs to the TRAFAC class translation factor GTPase superfamily. Classic translation factor GTPase family. LepA subfamily.

It localises to the mitochondrion inner membrane. It catalyses the reaction GTP + H2O = GDP + phosphate + H(+). Functionally, promotes mitochondrial protein synthesis. May act as a fidelity factor of the translation reaction, by catalyzing a one-codon backward translocation of tRNAs on improperly translocated ribosomes. Binds to mitochondrial ribosomes in a GTP-dependent manner. The sequence is that of Translation factor GUF1, mitochondrial from Vanderwaltozyma polyspora (strain ATCC 22028 / DSM 70294 / BCRC 21397 / CBS 2163 / NBRC 10782 / NRRL Y-8283 / UCD 57-17) (Kluyveromyces polysporus).